The primary structure comprises 513 residues: GMP synthase [glutamine-hydrolyzing] (513 aa).

Residues 5–195 (LVLVIDFGGQ…VYNICGCTGD (191 aa)) enclose the Glutamine amidotransferase type-1 domain. Catalysis depends on cysteine 82, which acts as the Nucleophile. Active-site residues include histidine 169 and glutamate 171. Residues 196 to 388 (WKMDSFVEKT…LGIPEKLVFR (193 aa)) enclose the GMPS ATP-PPase domain. ATP is bound at residue 223-229 (SGGVDSS).

Homodimer.

It carries out the reaction XMP + L-glutamine + ATP + H2O = GMP + L-glutamate + AMP + diphosphate + 2 H(+). It participates in purine metabolism; GMP biosynthesis; GMP from XMP (L-Gln route): step 1/1. Functionally, catalyzes the synthesis of GMP from XMP. This is GMP synthase [glutamine-hydrolyzing] from Clostridium botulinum (strain Eklund 17B / Type B).